Consider the following 1403-residue polypeptide: Mannuronan C5-epimerase AlgE1 (1403 aa).

7 PbH1 repeats span residues Asp133–Glu155, Thr157–Tyr179, Gln180–Thr202, Thr204–Arg226, Ala257–Gly279, Ala280–Val302, and Thr320–Gly359. Disordered stretches follow at residues Ser372 to Leu395 and Ala408 to Arg428. 8 Hemolysin-type calcium-binding repeats span residues Gly388 to Thr403, Gly406 to Leu422, Gly424 to Phe440, Gly557 to Leu573, Val574 to Phe591, Glu697 to Glu712, Gly716 to Leu732, and Gly734 to Phe750. 8 PbH1 repeats span residues Asp977–Glu999, Thr1001–Tyr1023, Leu1024–Thr1046, Thr1048–Arg1070, Thr1101–Gly1123, Thr1124–Val1146, Thr1163–Glu1185, and Ser1190–Gly1212. 3 Hemolysin-type calcium-binding repeats span residues Gly1227 to Leu1243, Tyr1244 to Leu1261, and Gly1263 to Phe1279.

It belongs to the D-mannuronate C5-epimerase family. The cofactor is Ca(2+).

The protein resides in the secreted. The catalysed reaction is [(1-&gt;4)-beta-D-mannuronosyl](n) = [alginate](n). It participates in glycan biosynthesis; alginate biosynthesis. With respect to regulation, inhibited by zinc. Functionally, converts beta-D-mannuronic acid (M) to alpha-L-guluronic acid (G), producing a polymer with gel-forming capacity, required for the formation of the cyst coat. In Azotobacter vinelandii, this protein is Mannuronan C5-epimerase AlgE1.